Here is a 555-residue protein sequence, read N- to C-terminus: Neurofilament light polypeptide (555 aa).

S2 carries the post-translational modification N-acetylserine. A head region spans residues 2 to 93; that stretch reads SSFSYEPYYS…KSIRTQEKAQ (92 aa). R23 is subject to Asymmetric dimethylarginine; alternate. R23 carries the omega-N-methylarginine; alternate modification. R30 carries the omega-N-methylarginine modification. Y43 bears the Phosphotyrosine mark. Phosphoserine is present on residues S56, S67, and S103. Positions 90 to 401 constitute an IF rod domain; sequence EKAQLQDLND…KLLEGEETRL (312 aa). Residues 94 to 125 are coil 1A; it reads LQDLNDRFASFIERVHELEQQNKVLEAELLVL. Residues 126–138 are linker 1; that stretch reads RQKHSEPSRFRAL. Residues 139 to 234 are coil 1B; the sequence is YEQEIRDLRL…KVHEEEIAEL (96 aa). The linker 12 stretch occupies residues 235–253; that stretch reads QAQIQYAQISVEMDVSSKP. A coil 2A region spans residues 254–272; that stretch reads DLSAALKDIRAQYEKLAAK. The linker 2 stretch occupies residues 273–281; the sequence is NMQNAEEWF. A coil 2B region spans residues 282-397; the sequence is KSRFTVLTES…AAYRKLLEGE (116 aa). The tail, subdomain A stretch occupies residues 398-444; sequence ETRLSFTSVGSLTTGYTQSSQVFGRSAYGGLQTSSYLMSARSFPSYY. The tract at residues 398 to 555 is tail; the sequence is ETRLSFTSVG…GEEQATKKKD (158 aa). The tail, subdomain B (acidic) stretch occupies residues 445 to 555; sequence TSHVQEEQIE…GEEQATKKKD (111 aa). The tract at residues 463 to 555 is disordered; it reads KAEEAKDEPP…GEEQATKKKD (93 aa). Positions 472–540 are enriched in acidic residues; sequence PSEGEAEEEE…ETKEAEEEEK (69 aa). S473 is subject to Phosphoserine. The residue at position 532 (T532) is a Phosphothreonine. Positions 541–555 are enriched in basic and acidic residues; the sequence is KDEGAGEEQATKKKD.

It belongs to the intermediate filament family. Forms homodimers (in vitro). Forms heterodimers with NEFH or NEFM; which can further hetero-oligomerize (in vitro). Forms heterodimers with INA (in vitro). Interacts with ARHGEF28. Interacts with TRIM2. O-glycosylated. In terms of processing, phosphorylated in the head and rod regions by the PKC kinase PKN1, leading to the inhibition of polymerization. Post-translationally, ubiquitinated in the presence of TRIM2 and UBE2D1.

Its subcellular location is the cell projection. The protein localises to the axon. The protein resides in the cytoplasm. It is found in the cytoskeleton. In terms of biological role, neurofilaments usually contain three intermediate filament proteins: NEFL, NEFM, and NEFH which are involved in the maintenance of neuronal caliber. May additionally cooperate with the neuronal intermediate filament proteins PRPH and INA to form neuronal filamentous networks. This Bos taurus (Bovine) protein is Neurofilament light polypeptide (NEFL).